Reading from the N-terminus, the 410-residue chain is Acetyltransferase aurG (410 aa).

A run of 3 helical transmembrane segments spans residues 3 to 23, 28 to 48, and 59 to 79; these read LWLVLANQVGLVGTLVLVVCF, SLVRPLLLPGITALVSYGLIL, and WSLVNLNTAGLFLQYLDVGLI. Over residues 90–99 the composition is skewed to polar residues; the sequence is TSSRGGQPNA. The tract at residues 90-112 is disordered; that stretch reads TSSRGGQPNASLDLAGRKKPPSS. Residue N98 is glycosylated (N-linked (GlcNAc...) asparagine). 4 consecutive transmembrane segments (helical) span residues 157–177, 219–239, 300–320, and 364–384; these read AMTLLWSVLVLDVMGLVGGDL, MYFSLQVVYSFLAIVFVMVGL, ILATFFVSGLLHLFCAEYSYG, and IGYVWVLLWFLWTSPAYFFPL.

The protein belongs to the wax synthase family.

Its subcellular location is the membrane. It functions in the pathway polyketide biosynthesis. Its function is as follows. Acetyltransferase; part of the gene cluster that mediates the biosynthesis of aurovertins, fungal polyketides that exhibit potent inhibition of adenosine triphosphate synthase. Tha biosynthesis starts with the HR-PKS aurA that selects propionate as the starter unit; synthesizes a hexa-ene chain through the repeated functions of the KR and DH domains in the first six iterations; selectively introduces three alpha-methyl substitutions at C4, C6, and C16 using the S-adensylmethionine-dependent cMET; and shuts off KR and DH in the last three iterations to afford a 1,3,5-triketo portion that can undergo intramolecular cyclization to yield the alpha-pyrone intermediate. AurE may act as a cyclase and enhances the rate of pyrone formation and product release of aurA. The methyltransferase aurB then methylates the C17 hydroxyl group. C17 methylation is required to initiate epoxidation by the downstream monooxygenase aurC. The monooxygenase aurC and the epoxide hydrolase aurD can iteratively transform the terminal triene portion of the methylated precursor into the dioxabicyclo[3.2.1]octane scaffold of aurovertin E. Epoxidation modifications of the precursor occur in two separate steps; bis-epoxidation of the two terminal olefins takes place first, followed by another epoxidation that occurs at C7-C8 after tetrahydrofuran formation. The O-acyltransferase aurG converts aurovertin E to aurovertin A. The sequence is that of Acetyltransferase aurG from Calcarisporium arbuscula (Dendryphion arbuscula).